A 29-amino-acid chain; its full sequence is Phospholemman-like protein (29 aa).

The protein belongs to the FXYD family. In terms of processing, phosphorylated by protein kinase C.

Its subcellular location is the membrane. In terms of biological role, induces a hyperpolarization-activated chloride current when expressed in Xenopus oocytes. The polypeptide is Phospholemman-like protein (Scyliorhinus canicula (Small-spotted catshark)).